Here is a 108-residue protein sequence, read N- to C-terminus: DNA-directed RNA polymerase subunit omega (108 aa).

This sequence belongs to the RNA polymerase subunit omega family. The RNAP catalytic core consists of 2 alpha, 1 beta, 1 beta' and 1 omega subunit. When a sigma factor is associated with the core the holoenzyme is formed, which can initiate transcription.

It carries out the reaction RNA(n) + a ribonucleoside 5'-triphosphate = RNA(n+1) + diphosphate. Promotes RNA polymerase assembly. Latches the N- and C-terminal regions of the beta' subunit thereby facilitating its interaction with the beta and alpha subunits. The chain is DNA-directed RNA polymerase subunit omega from Mycolicibacterium paratuberculosis (strain ATCC BAA-968 / K-10) (Mycobacterium paratuberculosis).